A 247-amino-acid chain; its full sequence is Carboxy-S-adenosyl-L-methionine synthase (247 aa).

S-adenosyl-L-methionine-binding positions include Tyr39, 64 to 66 (GCS), 89 to 90 (DN), 117 to 118 (DI), Asn132, and Arg199.

It belongs to the class I-like SAM-binding methyltransferase superfamily. Cx-SAM synthase family. In terms of assembly, homodimer.

The enzyme catalyses prephenate + S-adenosyl-L-methionine = carboxy-S-adenosyl-L-methionine + 3-phenylpyruvate + H2O. Its function is as follows. Catalyzes the conversion of S-adenosyl-L-methionine (SAM) to carboxy-S-adenosyl-L-methionine (Cx-SAM). This Escherichia coli O17:K52:H18 (strain UMN026 / ExPEC) protein is Carboxy-S-adenosyl-L-methionine synthase.